Consider the following 274-residue polypeptide: Nitrogenase iron protein (274 aa).

8-15 (GKGGIGKS) contacts ATP. C94 contacts [4Fe-4S] cluster. ADP-ribosylarginine; by dinitrogenase reductase ADP-ribosyltransferase is present on R97. C131 is a [4Fe-4S] cluster binding site.

Belongs to the NifH/BchL/ChlL family. As to quaternary structure, homodimer. The cofactor is [4Fe-4S] cluster. In terms of processing, the reversible ADP-ribosylation of Arg-97 inactivates the nitrogenase reductase and regulates nitrogenase activity.

It catalyses the reaction N2 + 8 reduced [2Fe-2S]-[ferredoxin] + 16 ATP + 16 H2O = H2 + 8 oxidized [2Fe-2S]-[ferredoxin] + 2 NH4(+) + 16 ADP + 16 phosphate + 6 H(+). Functionally, the key enzymatic reactions in nitrogen fixation are catalyzed by the nitrogenase complex, which has 2 components: the iron protein and the molybdenum-iron protein. The sequence is that of Nitrogenase iron protein from Prosthecochloris aestuarii (strain DSM 271 / SK 413).